Reading from the N-terminus, the 371-residue chain is Histidinol-phosphate aminotransferase (371 aa).

At Lys227 the chain carries N6-(pyridoxal phosphate)lysine.

Belongs to the class-II pyridoxal-phosphate-dependent aminotransferase family. Histidinol-phosphate aminotransferase subfamily. In terms of assembly, homodimer. Requires pyridoxal 5'-phosphate as cofactor.

It carries out the reaction L-histidinol phosphate + 2-oxoglutarate = 3-(imidazol-4-yl)-2-oxopropyl phosphate + L-glutamate. It participates in amino-acid biosynthesis; L-histidine biosynthesis; L-histidine from 5-phospho-alpha-D-ribose 1-diphosphate: step 7/9. The protein is Histidinol-phosphate aminotransferase of Sphingopyxis alaskensis (strain DSM 13593 / LMG 18877 / RB2256) (Sphingomonas alaskensis).